Reading from the N-terminus, the 342-residue chain is 6-hydroxytryprostatin B O-methyltransferase (342 aa).

D201 serves as a coordination point for S-adenosyl-L-methionine. H244 functions as the Proton acceptor in the catalytic mechanism.

The protein belongs to the class I-like SAM-binding methyltransferase superfamily. Cation-independent O-methyltransferase family. In terms of assembly, homodimer.

It catalyses the reaction 6-hydroxytryprostatin B + S-adenosyl-L-methionine = tryprostatin A + S-adenosyl-L-homocysteine + H(+). The protein operates within mycotoxin biosynthesis. Functionally, 6-hydroxytryprostatin B O-methyltransferase; part of the gene cluster that mediates the biosynthesis of fumitremorgins, indole alkaloids that carry not only intriguing chemical structures, but also interesting biological and pharmacological activities. The biosynthesis of fumitremorgin-type alkaloids begins by condensation of the two amino acids L-tryptophan and L-proline to brevianamide F, catalyzed by the non-ribosomal peptide synthetase ftmA. Brevianamide F is then prenylated by the prenyltransferase ftmPT1/ftmB in the presence of dimethylallyl diphosphate, resulting in the formation of tryprostatin B. The three cytochrome P450 monooxygenases, ftmP450-1/ftmC, ftmP450-2/ftmE and ftmP450-3/FtmG, are responsible for the conversion of tryprostatin B to 6-hydroxytryprostatin B, tryprostatin A to fumitremorgin C and fumitremorgin C to 12,13-dihydroxyfumitremorgin C, respectively. The putative methyltransferase ftmMT/ftmD is expected for the conversion of 6-hydroxytryprostatin B to tryprostatin A. FtmPT2/FtmH catalyzes the prenylation of 12,13-dihydroxyfumitre-morgin C in the presence of dimethylallyl diphosphate, resulting in the formation of fumitremorgin B. Fumitremorgin B is further converted to verruculogen by ftmOx1/ftmF via the insertion of an endoperoxide bond between the two prenyl moieties. In some fungal species, verruculogen is further converted to fumitremorgin A, but the enzymes involved in this step have not been identified yet. The polypeptide is 6-hydroxytryprostatin B O-methyltransferase (Aspergillus fumigatus (strain ATCC MYA-4609 / CBS 101355 / FGSC A1100 / Af293) (Neosartorya fumigata)).